Reading from the N-terminus, the 325-residue chain is ATP phosphoribosyltransferase (325 aa).

It belongs to the ATP phosphoribosyltransferase family. Long subfamily. Requires Mg(2+) as cofactor.

It localises to the cytoplasm. It catalyses the reaction 1-(5-phospho-beta-D-ribosyl)-ATP + diphosphate = 5-phospho-alpha-D-ribose 1-diphosphate + ATP. It functions in the pathway amino-acid biosynthesis; L-histidine biosynthesis; L-histidine from 5-phospho-alpha-D-ribose 1-diphosphate: step 1/9. Feedback inhibited by histidine. In terms of biological role, catalyzes the condensation of ATP and 5-phosphoribose 1-diphosphate to form N'-(5'-phosphoribosyl)-ATP (PR-ATP). Has a crucial role in the pathway because the rate of histidine biosynthesis seems to be controlled primarily by regulation of HisG enzymatic activity. This Nitrobacter hamburgensis (strain DSM 10229 / NCIMB 13809 / X14) protein is ATP phosphoribosyltransferase.